An 883-amino-acid chain; its full sequence is Alanine--tRNA ligase (883 aa).

The Zn(2+) site is built by histidine 560, histidine 564, cysteine 665, and histidine 669.

This sequence belongs to the class-II aminoacyl-tRNA synthetase family. Requires Zn(2+) as cofactor.

It localises to the cytoplasm. It carries out the reaction tRNA(Ala) + L-alanine + ATP = L-alanyl-tRNA(Ala) + AMP + diphosphate. Functionally, catalyzes the attachment of alanine to tRNA(Ala) in a two-step reaction: alanine is first activated by ATP to form Ala-AMP and then transferred to the acceptor end of tRNA(Ala). Also edits incorrectly charged Ser-tRNA(Ala) and Gly-tRNA(Ala) via its editing domain. The sequence is that of Alanine--tRNA ligase from Mesomycoplasma hyopneumoniae (strain 232) (Mycoplasma hyopneumoniae).